Here is a 308-residue protein sequence, read N- to C-terminus: Phosphoribosylaminoimidazole-succinocarboxamide synthase (308 aa).

Belongs to the SAICAR synthetase family.

It catalyses the reaction 5-amino-1-(5-phospho-D-ribosyl)imidazole-4-carboxylate + L-aspartate + ATP = (2S)-2-[5-amino-1-(5-phospho-beta-D-ribosyl)imidazole-4-carboxamido]succinate + ADP + phosphate + 2 H(+). Its pathway is purine metabolism; IMP biosynthesis via de novo pathway; 5-amino-1-(5-phospho-D-ribosyl)imidazole-4-carboxamide from 5-amino-1-(5-phospho-D-ribosyl)imidazole-4-carboxylate: step 1/2. This Xanthomonas oryzae pv. oryzae (strain PXO99A) protein is Phosphoribosylaminoimidazole-succinocarboxamide synthase.